The sequence spans 264 residues: MALKFAANLNFLFTERATSIAERIRLAHQNGFRAVEIPYPEGETSDVVSAVKETGVVVSLVNLAFDKSDDQLRFGSTSVPGSEKLFRSQLDATIDFARQVNCGKIHLTAGLFKGGQESDYTKTYTANLKIAADSLRASKMIGVIEPINKYAVPGYYMNSYSKAAGILADVAADNIQLLADLYHLQHLHGNVSKTLEEYKALIGHFQIAQVPHRHEPDVSGELDYGFVFKALQEFGYDGWIGCEYKPKTTTVEGLGWVSKLGYTL.

Residues Glu-145 and Glu-243 each act as proton donor/acceptor in the active site.

The protein belongs to the hyi family.

The catalysed reaction is 3-hydroxypyruvate = 2-hydroxy-3-oxopropanoate. Catalyzes the reversible isomerization between hydroxypyruvate and 2-hydroxy-3-oxopropanoate (also termed tartronate semialdehyde). The chain is Putative hydroxypyruvate isomerase (Gip) from Drosophila melanogaster (Fruit fly).